The following is a 527-amino-acid chain: DUF21 domain-containing protein At1g47330 (527 aa).

At M1–Y15 the chain is on the extracellular side. Residues C8 to E191 enclose the CNNM transmembrane domain. A helical membrane pass occupies residues V16–L36. The Cytoplasmic portion of the chain corresponds to M37–H70. The helical transmembrane segment at L71–L91 threads the bilayer. At D92–K93 the chain is on the extracellular side. The chain crosses the membrane as a helical span at residues I94–I114. The Cytoplasmic portion of the chain corresponds to M115–K126. Residues V127–Y147 traverse the membrane as a helical segment. The Extracellular portion of the chain corresponds to P148–L527. CBS domains lie at M210–L271, M274–E334, and K366–E435. 3 disordered regions span residues K307–L335, E358–A384, and I464–L527. At S315 the chain carries Phosphoserine. Over residues E358–N369 the composition is skewed to basic and acidic residues. Over residues I464–S501 the composition is skewed to low complexity. N475 carries N-linked (GlcNAc...) asparagine glycosylation. Residues V502 to S515 show a composition bias toward polar residues. Over residues P518–L527 the composition is skewed to basic and acidic residues.

The protein resides in the membrane. This is DUF21 domain-containing protein At1g47330 (CBSDUF7) from Arabidopsis thaliana (Mouse-ear cress).